The following is an 89-amino-acid chain: Small ribosomal subunit protein uS17 (89 aa).

The protein belongs to the universal ribosomal protein uS17 family. Part of the 30S ribosomal subunit.

Functionally, one of the primary rRNA binding proteins, it binds specifically to the 5'-end of 16S ribosomal RNA. This chain is Small ribosomal subunit protein uS17, found in Verminephrobacter eiseniae (strain EF01-2).